Consider the following 240-residue polypeptide: Fibronectin type III domain-containing protein 5 (240 aa).

The span at 1-10 (MQAARGGAGR) shows a compositional bias: gly residues. The tract at residues 1–30 (MQAARGGAGRPGREGRGLERECERSPGVGA) is disordered. Residues 11 to 24 (PGREGRGLERECER) are compositionally biased toward basic and acidic residues. Residues 64–155 (APVNVTVRHL…EPVLFKTPRE (92 aa)) enclose the Fibronectin type-III domain. 2 N-linked (GlcNAc...) asparagine glycosylation sites follow: Asn67 and Asn112. The chain crosses the membrane as a helical span at residues 181–201 (GEVLIIVVVLFMWAGVIALFC). Residues 210–221 (NEPNNNKEKTKS) are compositionally biased toward basic and acidic residues. The interval 210–240 (NEPNNNKEKTKSASETSTPEHQGGGLLRSKI) is disordered. Positions 231–240 (QGGGLLRSKI) are enriched in gly residues. The Microbody targeting signal signature appears at 238-240 (SKI).

As to quaternary structure, dimer; may exist in other oligomeric forms. In terms of processing, N-Glycosylated. The extracellular domain is cleaved and released from the cell membrane.

The protein resides in the cell membrane. Its subcellular location is the peroxisome membrane. It localises to the secreted. Functionally, mediates beneficial effects of muscular exercise. Induces browning of white adipose tissue by stimulating UCP1 expression, at least in part, via the nuclear receptor PPARA. This chain is Fibronectin type III domain-containing protein 5 (Fndc5), found in Rattus norvegicus (Rat).